Reading from the N-terminus, the 114-residue chain is Probable prefoldin subunit 2 (114 aa).

It belongs to the prefoldin subunit beta family. In terms of assembly, heterohexamer of two PFD-alpha type and four PFD-beta type subunits.

Its function is as follows. Binds specifically to cytosolic chaperonin (c-CPN) and transfers target proteins to it. Binds to nascent polypeptide chain and promotes folding in an environment in which there are many competing pathways for nonnative proteins. The chain is Probable prefoldin subunit 2 from Schizosaccharomyces pombe (strain 972 / ATCC 24843) (Fission yeast).